A 402-amino-acid chain; its full sequence is Zinc finger protein CONSTANS-LIKE 14 (402 aa).

Residues cysteine 12, cysteine 15, cysteine 35, histidine 40, cysteine 55, cysteine 58, cysteine 78, and histidine 83 each coordinate Zn(2+). Residues 12–54 (CEFCGERTAVLFCRADTAKLCLPCDQHVHSANLLSRKHVRSQI) form a B box-type 1; atypical zinc finger. The segment at 55-97 (CDNCSKEPVSVRCFTDNLVLCQECDWDVHGSCSSSATHERSAV) adopts a B box-type 2; atypical zinc-finger fold. Positions 287 to 322 (SYQQEDSVHSTSTKGQETSKSNNIPAAIHSHKSSND) are disordered. Residues 295–310 (HSTSTKGQETSKSNNI) show a composition bias toward polar residues. Residues 345–372 (VTNADLEQMAQNRDNAMQRYKEKKKTRR) adopt a coiled-coil conformation. Residues 357–399 (RDNAMQRYKEKKKTRRYDKTIRYETRKARAETRLRVKGRFVKA) form the CCT domain.

The protein belongs to the CONSTANS family.

The protein resides in the nucleus. The sequence is that of Zinc finger protein CONSTANS-LIKE 14 (COL14) from Arabidopsis thaliana (Mouse-ear cress).